The chain runs to 416 residues: Protein P47 (416 aa).

It belongs to the TULIP P47 family. In terms of assembly, part of a crude toxin extract that includes BoNTA2/NTNH, P47, OrfX2 and OrfX3; OrfX1 was not detected.

Part of a botulinum neurotoxin type A2 (BoNT) locus; may be part of a progenitor toxin complex required to protect BoNT during its passage through the host gastrointestinal tract. The chain is Protein P47 from Clostridium botulinum (strain Kyoto / Type A2).